Consider the following 30-residue polypeptide: AEVLMDFPQLTMTLPDGREESVMKLTTLVA.

It belongs to the ATPase alpha/beta chains family. As to quaternary structure, V-ATPase is a heteromultimeric enzyme composed of a peripheral catalytic V1 complex (main components: subunits A, B, C, D, E, and F) attached to an integral membrane V0 proton pore complex (main component: the proteolipid protein).

The catalysed reaction is ATP + H2O + 4 H(+)(in) = ADP + phosphate + 5 H(+)(out). In terms of biological role, catalytic subunit of the peripheral V1 complex of vacuolar ATPase. V-ATPase vacuolar ATPase is responsible for acidifying a variety of intracellular compartments in eukaryotic cells. The protein is V-type proton ATPase catalytic subunit A isoform 1 of Equisetum arvense (Field horsetail).